Here is a 1396-residue protein sequence, read N- to C-terminus: DNA-directed RNA polymerase subunit beta' (1396 aa).

The Zn(2+) site is built by C73, C75, C88, and C91. 3 residues coordinate Mg(2+): D467, D469, and D471. Residues C817, C891, C898, and C901 each coordinate Zn(2+).

It belongs to the RNA polymerase beta' chain family. As to quaternary structure, the RNAP catalytic core consists of 2 alpha, 1 beta, 1 beta' and 1 omega subunit. When a sigma factor is associated with the core the holoenzyme is formed, which can initiate transcription. Mg(2+) serves as cofactor. Requires Zn(2+) as cofactor.

The catalysed reaction is RNA(n) + a ribonucleoside 5'-triphosphate = RNA(n+1) + diphosphate. Functionally, DNA-dependent RNA polymerase catalyzes the transcription of DNA into RNA using the four ribonucleoside triphosphates as substrates. This chain is DNA-directed RNA polymerase subunit beta', found in Orientia tsutsugamushi (strain Boryong) (Rickettsia tsutsugamushi).